A 452-amino-acid chain; its full sequence is Bifunctional protein GlmU (452 aa).

Residues 1-232 (MTTRTSLTIV…EDEVRGINTK (232 aa)) are pyrophosphorylase. Residues 11–14 (LAAG), lysine 25, glutamine 78, and 83–84 (GT) each bind UDP-N-acetyl-alpha-D-glucosamine. Aspartate 108 provides a ligand contact to Mg(2+). Positions 144, 158, 173, and 230 each coordinate UDP-N-acetyl-alpha-D-glucosamine. Asparagine 230 provides a ligand contact to Mg(2+). The tract at residues 233–253 (AQLAEAEAVMQTRLRQAAMTA) is linker. An N-acetyltransferase region spans residues 254 to 452 (GVTLISPETI…SARARKPKTS (199 aa)). UDP-N-acetyl-alpha-D-glucosamine contacts are provided by arginine 319 and lysine 337. The active-site Proton acceptor is the histidine 349. Residues tyrosine 352 and asparagine 363 each contribute to the UDP-N-acetyl-alpha-D-glucosamine site. Residues alanine 366, 372 to 373 (NY), serine 391, serine 409, and arginine 426 each bind acetyl-CoA.

This sequence in the N-terminal section; belongs to the N-acetylglucosamine-1-phosphate uridyltransferase family. In the C-terminal section; belongs to the transferase hexapeptide repeat family. As to quaternary structure, homotrimer. Requires Mg(2+) as cofactor.

The protein resides in the cytoplasm. The enzyme catalyses alpha-D-glucosamine 1-phosphate + acetyl-CoA = N-acetyl-alpha-D-glucosamine 1-phosphate + CoA + H(+). It catalyses the reaction N-acetyl-alpha-D-glucosamine 1-phosphate + UTP + H(+) = UDP-N-acetyl-alpha-D-glucosamine + diphosphate. The protein operates within nucleotide-sugar biosynthesis; UDP-N-acetyl-alpha-D-glucosamine biosynthesis; N-acetyl-alpha-D-glucosamine 1-phosphate from alpha-D-glucosamine 6-phosphate (route II): step 2/2. It participates in nucleotide-sugar biosynthesis; UDP-N-acetyl-alpha-D-glucosamine biosynthesis; UDP-N-acetyl-alpha-D-glucosamine from N-acetyl-alpha-D-glucosamine 1-phosphate: step 1/1. Its pathway is bacterial outer membrane biogenesis; LPS lipid A biosynthesis. In terms of biological role, catalyzes the last two sequential reactions in the de novo biosynthetic pathway for UDP-N-acetylglucosamine (UDP-GlcNAc). The C-terminal domain catalyzes the transfer of acetyl group from acetyl coenzyme A to glucosamine-1-phosphate (GlcN-1-P) to produce N-acetylglucosamine-1-phosphate (GlcNAc-1-P), which is converted into UDP-GlcNAc by the transfer of uridine 5-monophosphate (from uridine 5-triphosphate), a reaction catalyzed by the N-terminal domain. This Rhodopseudomonas palustris (strain BisB5) protein is Bifunctional protein GlmU.